A 403-amino-acid polypeptide reads, in one-letter code: Glucosyl-3-phosphoglycerate synthase (403 aa).

Asp150 is an a divalent metal cation binding site. 189 to 192 contributes to the (2R)-3-phosphoglycerate binding site; sequence GRVT. His273 provides a ligand contact to a divalent metal cation.

The protein belongs to the glycosyltransferase 2 family. Homodimer. The cofactor is Mn(2+). Co(2+) serves as cofactor. It depends on Mg(2+) as a cofactor. Ni(2+) is required as a cofactor.

It carries out the reaction an NDP-alpha-D-glucose + (2R)-3-phosphoglycerate = (2R)-2-O-(alpha-D-glucopyranosyl)-3-phospho-glycerate + a ribonucleoside 5'-diphosphate + H(+). In terms of biological role, involved in the biosynthesis of 6-O-methylglucose lipopolysaccarides (MGLPs). Catalyzes the transfer of a glucose (Glc) moiety from uridine diphosphate (UDP-Glc) to the position 2 of 3-phospho-D-glycerate (3-PGA) to form glucosyl-3-phosphoglycerate (GPG). GpgS is most active with UDP-glucose, followed by GDP-glucose, ADP-glucose, and to a lesser extent, TDP-glucose. 3-PGA is the only acceptor for these glucosyl donors. This is Glucosyl-3-phosphoglycerate synthase from Persephonella marina (strain DSM 14350 / EX-H1).